Consider the following 418-residue polypeptide: Cell division protein FtsZ (418 aa).

Residues 27–31, 114–116, Glu-145, Lys-149, and Asp-193 each bind GTP; these read GGGSN and GTG. A disordered region spans residues 386-418; that stretch reads KNGVKGHTFGVPLPSVNEDLDEPTFLRNRNKGL.

It belongs to the FtsZ family. As to quaternary structure, homodimer. Polymerizes to form a dynamic ring structure in a strictly GTP-dependent manner. Interacts directly with several other division proteins.

It localises to the cytoplasm. Essential cell division protein that forms a contractile ring structure (Z ring) at the future cell division site. The regulation of the ring assembly controls the timing and the location of cell division. One of the functions of the FtsZ ring is to recruit other cell division proteins to the septum to produce a new cell wall between the dividing cells. Binds GTP and shows GTPase activity. In Treponema pallidum (strain Nichols), this protein is Cell division protein FtsZ.